A 139-amino-acid chain; its full sequence is Nucleoside diphosphate kinase (139 aa).

ATP contacts are provided by Lys-12, Phe-60, Arg-88, Thr-94, Arg-105, and Asn-115. The active-site Pros-phosphohistidine intermediate is the His-118.

It belongs to the NDK family. Homotetramer. Mg(2+) serves as cofactor.

It is found in the cytoplasm. The catalysed reaction is a 2'-deoxyribonucleoside 5'-diphosphate + ATP = a 2'-deoxyribonucleoside 5'-triphosphate + ADP. The enzyme catalyses a ribonucleoside 5'-diphosphate + ATP = a ribonucleoside 5'-triphosphate + ADP. Its function is as follows. Major role in the synthesis of nucleoside triphosphates other than ATP. The ATP gamma phosphate is transferred to the NDP beta phosphate via a ping-pong mechanism, using a phosphorylated active-site intermediate. The polypeptide is Nucleoside diphosphate kinase (Caldanaerobacter subterraneus subsp. tengcongensis (strain DSM 15242 / JCM 11007 / NBRC 100824 / MB4) (Thermoanaerobacter tengcongensis)).